Consider the following 309-residue polypeptide: Homoserine kinase (309 aa).

Residue proline 91 to cysteine 101 participates in ATP binding.

Belongs to the GHMP kinase family. Homoserine kinase subfamily.

The protein localises to the cytoplasm. The enzyme catalyses L-homoserine + ATP = O-phospho-L-homoserine + ADP + H(+). It participates in amino-acid biosynthesis; L-threonine biosynthesis; L-threonine from L-aspartate: step 4/5. Functionally, catalyzes the ATP-dependent phosphorylation of L-homoserine to L-homoserine phosphate. The polypeptide is Homoserine kinase (Serratia proteamaculans (strain 568)).